Consider the following 798-residue polypeptide: Integrin beta-1-B (798 aa).

The N-terminal stretch at Met-1–Ala-21 is a signal peptide. Over Gln-22–Pro-727 the chain is Extracellular. The 51-residue stretch at Glu-27 to Pro-77 folds into the PSI domain. 28 disulfides stabilise this stretch: Cys-28/Cys-46, Cys-36/Cys-464, Cys-39/Cys-65, Cys-49/Cys-76, Cys-206/Cys-212, Cys-260/Cys-300, Cys-400/Cys-414, Cys-434/Cys-462, Cys-466/Cys-486, Cys-477/Cys-489, Cys-491/Cys-500, Cys-502/Cys-533, Cys-516/Cys-531, Cys-525/Cys-536, Cys-538/Cys-553, Cys-555/Cys-576, Cys-560/Cys-574, Cys-568/Cys-579, Cys-581/Cys-590, Cys-592/Cys-615, Cys-599/Cys-613, Cys-607/Cys-618, Cys-620/Cys-630, Cys-633/Cys-636, Cys-640/Cys-691, Cys-646/Cys-665, Cys-649/Cys-661, and Cys-699/Cys-723. A disordered region spans residues Pro-77–Asp-106. Residues Asn-109 and Asn-131 are each glycosylated (N-linked (GlcNAc...) asparagine). A VWFA domain is found at Asp-139 to Leu-377. Residues Ser-151 and Ser-153 each contribute to the Mg(2+) site. 4 residues coordinate Ca(2+): Ser-153, Asp-156, Asp-157, and Glu-188. Residues Asn-211 and Asn-223 are each glycosylated (N-linked (GlcNAc...) asparagine). Residues Asn-243, Asp-245, Pro-247, and Glu-248 each contribute to the Ca(2+) site. Glu-248 serves as a coordination point for Mg(2+). Asn-268 and Asn-362 each carry an N-linked (GlcNAc...) asparagine glycan. A glycan (N-linked (GlcNAc...) asparagine) is linked at Asn-416. I-EGF domains are found at residues Cys-466–Glu-501, Cys-502–Glu-554, Cys-555–Asp-591, and Cys-592–Glu-631. An N-linked (GlcNAc...) asparagine glycan is attached at Asn-481. The N-linked (GlcNAc...) asparagine glycan is linked to Asn-520. N-linked (GlcNAc...) asparagine glycosylation occurs at Asn-584. N-linked (GlcNAc...) asparagine glycosylation occurs at Asn-669. The chain crosses the membrane as a helical span at residues Asp-728 to Trp-751. Over Lys-752–Lys-798 the chain is Cytoplasmic. Tyr-783 carries the post-translational modification Phosphotyrosine.

It belongs to the integrin beta chain family. Heterodimer of an alpha and a beta subunit.

The protein localises to the cell membrane. The protein resides in the cell projection. It is found in the invadopodium membrane. Its subcellular location is the ruffle membrane. It localises to the melanosome. The protein localises to the cleavage furrow. The protein resides in the lamellipodium. It is found in the ruffle. Beta integrins associate with alpha subunits to form receptor complexes that recognize the sequence R-G-D in a wide array of ligands. May be involved in osteoblast compaction. May play role in myoblast differentiation and fusion during skeletal myogenesis. The sequence is that of Integrin beta-1-B (itgb1-b) from Xenopus laevis (African clawed frog).